The chain runs to 100 residues: Urease subunit gamma (100 aa).

Belongs to the urease gamma subunit family. As to quaternary structure, heterotrimer of UreA (gamma), UreB (beta) and UreC (alpha) subunits. Three heterotrimers associate to form the active enzyme.

The protein resides in the cytoplasm. It catalyses the reaction urea + 2 H2O + H(+) = hydrogencarbonate + 2 NH4(+). Its pathway is nitrogen metabolism; urea degradation; CO(2) and NH(3) from urea (urease route): step 1/1. The protein is Urease subunit gamma of Burkholderia ambifaria (strain MC40-6).